The sequence spans 370 residues: D-alanine--D-alanine ligase (370 aa).

The 207-residue stretch at Lys142–Gln348 folds into the ATP-grasp domain. Residue Gln172 to Val227 coordinates ATP. Asp302, Glu315, and Asn317 together coordinate Mg(2+).

The protein belongs to the D-alanine--D-alanine ligase family. It depends on Mg(2+) as a cofactor. Requires Mn(2+) as cofactor.

It is found in the cytoplasm. The catalysed reaction is 2 D-alanine + ATP = D-alanyl-D-alanine + ADP + phosphate + H(+). The protein operates within cell wall biogenesis; peptidoglycan biosynthesis. Its function is as follows. Cell wall formation. In Lactiplantibacillus plantarum (strain ATCC BAA-793 / NCIMB 8826 / WCFS1) (Lactobacillus plantarum), this protein is D-alanine--D-alanine ligase.